Consider the following 444-residue polypeptide: UDP-N-acetylmuramoylalanine--D-glutamate ligase (444 aa).

An ATP-binding site is contributed by 109 to 115 (GSNGKTT).

The protein belongs to the MurCDEF family.

Its subcellular location is the cytoplasm. It carries out the reaction UDP-N-acetyl-alpha-D-muramoyl-L-alanine + D-glutamate + ATP = UDP-N-acetyl-alpha-D-muramoyl-L-alanyl-D-glutamate + ADP + phosphate + H(+). Its pathway is cell wall biogenesis; peptidoglycan biosynthesis. Cell wall formation. Catalyzes the addition of glutamate to the nucleotide precursor UDP-N-acetylmuramoyl-L-alanine (UMA). In Bacteroides thetaiotaomicron (strain ATCC 29148 / DSM 2079 / JCM 5827 / CCUG 10774 / NCTC 10582 / VPI-5482 / E50), this protein is UDP-N-acetylmuramoylalanine--D-glutamate ligase.